Reading from the N-terminus, the 328-residue chain is MCPAGWKLLAMLALVLVVMVWYSISREDSFYFPIPEKKEPCLQGEAESKASKLFGNYSRDQPIFLRLEDYFWVKTPSAYELPYGTKGSEDLLLRVLAITSSSIRKNIQSLRCRRCVVVGNGHRLRNSSLGDAINKYDVVIRLNNAPVAGYEGDVGSKTTMRLFYPESAHFDPKVENNPDTLLVLVAFKAMDFHWIETILSDKKRVRKGFWKQPPLIWDVNPKQIRILNPFFMEIAADKLLSLPMQQPRKIKQKPTTGLLAITLALHLCDLVHIAGFGYPDAYNKKQTIHYYEQITLKSMAGSGHNVSQEALAIKRMLEMGAVKNLTSF.

Over methionine 1–lysine 7 the chain is Cytoplasmic. Residues leucine 8–serine 25 form a helical; Signal-anchor for type II membrane protein membrane-spanning segment. The Lumenal portion of the chain corresponds to arginine 26 to phenylalanine 328. 4 N-linked (GlcNAc...) asparagine glycosylation sites follow: asparagine 56, asparagine 126, asparagine 305, and asparagine 324. Cysteines 115 and 268 form a disulfide.

The protein belongs to the glycosyltransferase 29 family. Post-translationally, the soluble form derives from the membrane form by proteolytic processing.

The protein localises to the golgi apparatus. It localises to the golgi stack membrane. It is found in the secreted. It carries out the reaction a beta-D-galactosyl-(1-&gt;3)-N-acetyl-beta-D-galactosaminyl derivative + CMP-N-acetyl-beta-neuraminate = an N-acetyl-alpha-neuraminyl-(2-&gt;3)-beta-D-galactosyl-(1-&gt;3)-N-acetyl-beta-D-galactosaminyl derivative + CMP + H(+). The enzyme catalyses a beta-D-galactosyl-(1-&gt;3)-N-acetyl-alpha-D-galactosaminyl derivative + CMP-N-acetyl-beta-neuraminate = an N-acetyl-alpha-neuraminyl-(2-&gt;3)-beta-D-galactosyl-(1-&gt;3)-N-acetyl-alpha-D-galactosaminyl derivative + CMP + H(+). The catalysed reaction is a beta-D-galactosyl-(1-&gt;4)-N-acetyl-beta-D-glucosaminyl derivative + CMP-N-acetyl-beta-neuraminate = an N-acetyl-alpha-neuraminyl-(2-&gt;3)-beta-D-galactosyl-(1-&gt;4)-N-acetyl-beta-D-glucosaminyl derivative + CMP + H(+). It catalyses the reaction a ganglioside GM1 (d18:1(4E)) + CMP-N-acetyl-beta-neuraminate = a ganglioside GD1a (d18:1(4E)) + CMP + H(+). It carries out the reaction a ganglioside GA1 (d18:1(4E)) + CMP-N-acetyl-beta-neuraminate = a ganglioside GM1b (d18:1(4E)) + CMP + H(+). The enzyme catalyses a ganglioside GT1c (d18:1(4E)) + CMP-N-acetyl-beta-neuraminate = a ganglioside GQ1c (d18:1(4E)) + CMP + H(+). The catalysed reaction is a neolactoside nLc4Cer + CMP-N-acetyl-beta-neuraminate = a neolactoside IV(3)-alpha-NeuAc-nLc4Cer + CMP + H(+). It catalyses the reaction a neolactoside nLc4Cer(d18:1(4E)) + CMP-N-acetyl-beta-neuraminate = a neolactoside IV(3)-alpha-NeuAc-nLc4Cer(d18:1(4E)) + CMP + H(+). It participates in protein modification; protein glycosylation. The protein operates within glycolipid biosynthesis. In terms of biological role, a beta-galactoside alpha2-3 sialyltransferase involved in terminal sialylation of glycoproteins and glycolipids. Catalyzes the transfer of sialic acid (N-acetyl-neuraminic acid; Neu5Ac) from the nucleotide sugar donor CMP-Neu5Ac onto acceptor Galbeta-(1-&gt;3)-GalNAc- and Galbeta-(1-&gt;4)-GlcNAc-terminated glycoconjugates through an alpha2-3 linkage. Plays a major role in hemostasis. Responsible for sialylation of plasma VWF/von Willebrand factor, preventing its recognition by asialoglycoprotein receptors (ASGPR) and subsequent clearance. Regulates ASGPR-mediated clearance of platelets. Participates in the biosynthesis of the sialyl Lewis X epitopes, both on O- and N-glycans, which are recognized by SELE/E-selectin, SELP/P-selectin and SELL/L-selectin. Essential for selectin-mediated rolling and adhesion of leukocytes during extravasation. Contributes to adhesion and transendothelial migration of neutrophils likely through terminal sialylation of CXCR2. In glycosphingolipid biosynthesis, sialylates GM1 and GA1 gangliosides to form GD1a and GM1b, respectively. Metabolizes brain c-series ganglioside GT1c forming GQ1c. Synthesizes ganglioside LM1 (IV3Neu5Ac-nLc4Cer), a major structural component of peripheral nerve myelin. This chain is CMP-N-acetylneuraminate-beta-galactosamide-alpha-2,3-sialyltransferase 4 (ST3GAL4), found in Pan troglodytes (Chimpanzee).